The chain runs to 138 residues: Small ribosomal subunit protein uS12 (138 aa).

The residue at position 89 (Asp-89) is a 3-methylthioaspartic acid. Positions 101–138 (ALDTAGTQNRNQGRSKYGTKRPKKGAATAAKGPVKGKK) are disordered. Residues 105–114 (AGTQNRNQGR) show a composition bias toward polar residues. Residues 125–138 (GAATAAKGPVKGKK) are compositionally biased toward low complexity.

The protein belongs to the universal ribosomal protein uS12 family. In terms of assembly, part of the 30S ribosomal subunit. Contacts proteins S8 and S17. May interact with IF1 in the 30S initiation complex.

Functionally, with S4 and S5 plays an important role in translational accuracy. Interacts with and stabilizes bases of the 16S rRNA that are involved in tRNA selection in the A site and with the mRNA backbone. Located at the interface of the 30S and 50S subunits, it traverses the body of the 30S subunit contacting proteins on the other side and probably holding the rRNA structure together. The combined cluster of proteins S8, S12 and S17 appears to hold together the shoulder and platform of the 30S subunit. The sequence is that of Small ribosomal subunit protein uS12 from Heliobacterium modesticaldum (strain ATCC 51547 / Ice1).